The chain runs to 126 residues: Bleomycin resistance protein (126 aa).

A VOC domain is found at 1–119 (MTDQATPNLP…DGTLLRLIQN (119 aa)).

This sequence belongs to the bleomycin resistance protein family.

In terms of biological role, binding protein with a strong affinity to the bleomycin family of antibiotics. Binds to CL990; an antimitotic-antibiotic compound. This Klebsiella pneumoniae protein is Bleomycin resistance protein (ble).